The chain runs to 433 residues: 5-methylthioadenosine/S-adenosylhomocysteine deaminase (433 aa).

The Zn(2+) site is built by H67 and H69. Positions 96, 148, 158, and 186 each coordinate substrate. Position 213 (H213) interacts with Zn(2+). Residues E216 and D301 each coordinate substrate. D301 contacts Zn(2+).

Belongs to the metallo-dependent hydrolases superfamily. MTA/SAH deaminase family. Requires Zn(2+) as cofactor.

It catalyses the reaction S-adenosyl-L-homocysteine + H2O + H(+) = S-inosyl-L-homocysteine + NH4(+). It carries out the reaction S-methyl-5'-thioadenosine + H2O + H(+) = S-methyl-5'-thioinosine + NH4(+). Catalyzes the deamination of 5-methylthioadenosine and S-adenosyl-L-homocysteine into 5-methylthioinosine and S-inosyl-L-homocysteine, respectively. Is also able to deaminate adenosine. The chain is 5-methylthioadenosine/S-adenosylhomocysteine deaminase from Pelotomaculum thermopropionicum (strain DSM 13744 / JCM 10971 / SI).